A 453-amino-acid polypeptide reads, in one-letter code: tRNA-2-methylthio-N(6)-dimethylallyladenosine synthase (453 aa).

The 121-residue stretch at 11 to 131 (KSFHVKSFGC…LPQLVADAAE (121 aa)) folds into the MTTase N-terminal domain. The [4Fe-4S] cluster site is built by C20, C56, C94, C167, C171, and C174. Residues 153–385 (RRQGPTAFLT…QALLNEQQHR (233 aa)) form the Radical SAM core domain. Residues 388 to 449 (LATVGKRCEV…PNSLSGALVE (62 aa)) enclose the TRAM domain.

Belongs to the methylthiotransferase family. MiaB subfamily. As to quaternary structure, monomer. [4Fe-4S] cluster serves as cofactor.

The protein resides in the cytoplasm. It catalyses the reaction N(6)-dimethylallyladenosine(37) in tRNA + (sulfur carrier)-SH + AH2 + 2 S-adenosyl-L-methionine = 2-methylsulfanyl-N(6)-dimethylallyladenosine(37) in tRNA + (sulfur carrier)-H + 5'-deoxyadenosine + L-methionine + A + S-adenosyl-L-homocysteine + 2 H(+). Its function is as follows. Catalyzes the methylthiolation of N6-(dimethylallyl)adenosine (i(6)A), leading to the formation of 2-methylthio-N6-(dimethylallyl)adenosine (ms(2)i(6)A) at position 37 in tRNAs that read codons beginning with uridine. The chain is tRNA-2-methylthio-N(6)-dimethylallyladenosine synthase from Rhizorhabdus wittichii (strain DSM 6014 / CCUG 31198 / JCM 15750 / NBRC 105917 / EY 4224 / RW1) (Sphingomonas wittichii).